The chain runs to 181 residues: Large ribosomal subunit protein uL10 (181 aa).

The protein belongs to the universal ribosomal protein uL10 family. Part of the ribosomal stalk of the 50S ribosomal subunit. The N-terminus interacts with L11 and the large rRNA to form the base of the stalk. The C-terminus forms an elongated spine to which L12 dimers bind in a sequential fashion forming a multimeric L10(L12)X complex.

Its function is as follows. Forms part of the ribosomal stalk, playing a central role in the interaction of the ribosome with GTP-bound translation factors. The sequence is that of Large ribosomal subunit protein uL10 from Acidobacterium capsulatum (strain ATCC 51196 / DSM 11244 / BCRC 80197 / JCM 7670 / NBRC 15755 / NCIMB 13165 / 161).